A 1213-amino-acid chain; its full sequence is MVDVNRFKSMQITLASPSKVRSWSYGEVKKPETINYRTLKPEREGLFDEVIFGPTKDWECACGKYKRIRYKGIVCDRCGVEVTRAKVRRERMGHIELKAPVSHIWYFKGIPSRMGLTLDMSPRALEEVIYFAAYVVIDPKDTPLEPKSLLTEREYREKLQEYGHGSFVAKMGAEAIQDLLKRVDLAAEIAELKEELKSASGQKRIKAVRRLDVLDAFNKSGNKPEWMVLNILPVIPPDLRPMVQLDGGRFAASDLNDLYRRVINRNNRLARLLELNAPGIIVQNEKRMLQEAVDALIDNGRRGRPITGPGSRPLKSLSHMLKGKQGRFRQNLLGKRVDFSGRSVIAVGPTLKMYQCGVPREMAIELFKPFVMREIVAKEYAGNVKAAKRMVERGDERIWDILEEVIKEHPVLLNRAPTLHRLGIQAFEPVLIDGKALRLHPLVCEAYNADFDGDQMAIHVPLSEEAQAEARLLMLAAEHILNPKDGKPVVTPSQDMVLGNYYLTMEDAGREGEGMIFKDKDEAVMAYRNGYAHLHSRVGIAVDSMPNKPWKDSQRHKIMVTTVGKILFNDIMPEDLPYLQEPNNANLTEGTPDKYFLEPGQDIQEVIDRLDINVPFKKKNLGNIIAETFKRFRTTETSAFLDRLKDLGYYHSTLAGLTVGIADIPVIDNKAEIIDAAHHRVEEINKAFRRGLMTDDDRYVAVTTTWREAKEALEKRLIETQDPKNPIVMMMDSGARGNISNFSQLAGMRGLMAAPNGRIMELPILSNFREGLSVLEMFFSTHGARKGMTDTALKTADSGYLTRRLVDVAQDVIIREDDCGTDRGLLIRAITDGKEVTETLEERLQGRYTRKSVKHPETGEVLIGADQLITEDMARKIVDAGVEEVTIRSVFTCATRHGVCRHCYGINLATGDAVEVGEAVGTIAAQSIGEPGTQLTMRTFHTGGVASNTDITQGLPRIQEIFEARNPKGEAVITEVKGNVVEIEEDASTRTKKVYVQGKTGMGEYVVPFTARMKVEVGDEVNRGAALTEGSIQPKRLLEVRDTLSVETYLLAEVQKVYRSQGVEIGDKHVEVMVRQMLRKVRVMDPGDTDLLPGTLMDISDFTDANKDIVISGGIPATSRPVLMGITKASLETNSFLSAASFQETTRVLTDAAIRGKKDHLLGLKENVIIGKIIPAGTGMARYRNIEPQAMNEIEVIDHTEVSAEAVFTAEAE.

Cys60, Cys62, Cys75, and Cys78 together coordinate Zn(2+). Mg(2+)-binding residues include Asp450, Asp452, and Asp454. 4 residues coordinate Zn(2+): Cys819, Cys893, Cys900, and Cys903.

The protein belongs to the RNA polymerase beta' chain family. As to quaternary structure, the RNAP catalytic core consists of 2 alpha, 1 beta, 1 beta' and 1 omega subunit. When a sigma factor is associated with the core the holoenzyme is formed, which can initiate transcription. It depends on Mg(2+) as a cofactor. Zn(2+) serves as cofactor.

It carries out the reaction RNA(n) + a ribonucleoside 5'-triphosphate = RNA(n+1) + diphosphate. In terms of biological role, DNA-dependent RNA polymerase catalyzes the transcription of DNA into RNA using the four ribonucleoside triphosphates as substrates. This is DNA-directed RNA polymerase subunit beta' from Streptococcus pyogenes serotype M28 (strain MGAS6180).